The following is a 1437-amino-acid chain: Protein CC2D2B (1437 aa).

In Homo sapiens (Human), this protein is Protein CC2D2B.